We begin with the raw amino-acid sequence, 99 residues long: Small integral membrane protein 14 (99 aa).

Over 1–49 (MAEGGFDPCECVCSHEHAMRRLINLLRQSQSYCTDTECLQELPGPSSDN) the chain is Lumenal. The chain crosses the membrane as a helical span at residues 50–70 (GISITMILMAWMVIAVILFLL). Residues 71–99 (RPPNLRGSNLTGKPASPHNGQDPPAPPVD) are Cytoplasmic-facing. Residues 78–99 (SNLTGKPASPHNGQDPPAPPVD) form a disordered region.

The protein resides in the endoplasmic reticulum membrane. The sequence is that of Small integral membrane protein 14 (SMIM14) from Bos taurus (Bovine).